The chain runs to 676 residues: RNA helicase NPH-II (676 aa).

Residues 172-347 (FLAWISHRPV…IFLPNPAFIH (176 aa)) enclose the Helicase ATP-binding domain. Position 185–192 (185–192 (GGTGVGKT)) interacts with ATP. The DEXH box signature appears at 296-299 (DEVH). The 170-residue stretch at 366–535 (NPSSRMAYIE…NYILYANKFN (170 aa)) folds into the Helicase C-terminal domain.

Belongs to the DEAD box helicase family. DEAH subfamily. As to quaternary structure, monomer.

It is found in the virion. The catalysed reaction is ATP + H2O = ADP + phosphate + H(+). Its function is as follows. NTP-dependent helicase that catalyzes unidirectional unwinding of 3'tailed duplex RNAs and plays an important role during transcription of early mRNAs, presumably by preventing R-loop formation behind the elongating RNA polymerase. Might also play a role in the export of newly synthesized mRNA chains out of the core into the cytoplasm. Required for replication and propagation of viral particles. This is RNA helicase NPH-II (OPG084) from Monkeypox virus.